Reading from the N-terminus, the 478-residue chain is Sodium-coupled neutral amino acid transporter 5 (478 aa).

Residues 1-20 are disordered; sequence MAISSAEGMELQDPKMNGAL. Topologically, residues 1 to 57 are cytoplasmic; it reads MAISSAEGMELQDPKMNGALPGNAVEQEHEGFLPSHSPSPGRKPAQFMDFEGKTSFG. The chain crosses the membrane as a helical span at residues 58–80; the sequence is MSVFNLSNAIMGSGILGLAYAMA. Topologically, residues 81–93 are extracellular; the sequence is HTGILLFLALLLC. The chain crosses the membrane as a helical span at residues 94–114; sequence IALLSSYSIHLLLTCAGVVGI. Residues 115–131 lie on the Cytoplasmic side of the membrane; the sequence is RAYEQLGQRALGPAGKV. The chain crosses the membrane as a helical span at residues 132–152; that stretch reads VVAAVICLHNVGAMSSYLFII. Residues 153 to 172 lie on the Extracellular side of the membrane; it reads KSELPLVIATFLDMDPEGDW. The chain crosses the membrane as a helical span at residues 173–193; sequence FLKGNLLIIIVSVLIILPLAL. At 194–198 the chain is on the cytoplasmic side; that stretch reads MRHLG. A helical transmembrane segment spans residues 199-219; it reads YLGYTSGLSLTCMLFFLISVI. The Extracellular segment spans residues 220 to 263; sequence YKKFQLGCTVGHNGTAVESKSSPSLPIHGLNTSCEAQMFTADSQ. C227 and C253 form a disulfide bridge. N-linked (GlcNAc...) asparagine glycosylation is present at N232. The chain crosses the membrane as a helical span at residues 264 to 284; it reads MFYTVPIMAFAFVCHPEVLPI. Residues 285–301 lie on the Cytoplasmic side of the membrane; the sequence is YTELCRPSKRRMQAVAN. A helical membrane pass occupies residues 302–322; it reads VSIGAMFCMYGLTATFGYLTF. The Extracellular portion of the chain corresponds to 323–340; the sequence is YSSVEAEMLHMYSQHDLL. Residues 341 to 361 traverse the membrane as a helical segment; it reads ILCVRLAVLLAVTLTVPVVLF. The Cytoplasmic portion of the chain corresponds to 362 to 382; sequence PIRRALQQLLFPSKAFSWPRH. Residues 383-403 traverse the membrane as a helical segment; that stretch reads VAIALILLVLVNVLVICVPTI. The Extracellular segment spans residues 404–405; sequence RD. A helical membrane pass occupies residues 406-426; sequence IFGVIGSTSAPSLIFILPSIF. Topologically, residues 427 to 445 are cytoplasmic; it reads YLRIVPSEVEPLYSWPKIQ. The helical transmembrane segment at 446–466 threads the bilayer; it reads ALCFGVLGVLFMAISLGFMFA. Residues 467–478 are Extracellular-facing; sequence NWATGQSHVSGH.

Belongs to the amino acid/polyamine transporter 2 family.

The protein resides in the cell membrane. The catalysed reaction is L-serine(out) + Na(+)(out) + H(+)(in) = L-serine(in) + Na(+)(in) + H(+)(out). It catalyses the reaction L-alanine(out) + Na(+)(out) + H(+)(in) = L-alanine(in) + Na(+)(in) + H(+)(out). It carries out the reaction glycine(out) + Na(+)(out) + H(+)(in) = glycine(in) + Na(+)(in) + H(+)(out). The enzyme catalyses L-glutamine(out) + Na(+)(out) + H(+)(in) = L-glutamine(in) + Na(+)(in) + H(+)(out). The catalysed reaction is L-asparagine(out) + Na(+)(out) + H(+)(in) = L-asparagine(in) + Na(+)(in) + H(+)(out). It catalyses the reaction L-histidine(out) + Na(+)(out) + H(+)(in) = L-histidine(in) + Na(+)(in) + H(+)(out). It carries out the reaction L-cysteine(out) + Na(+)(out) + H(+)(in) = L-cysteine(in) + Na(+)(in) + H(+)(out). Its activity is regulated as follows. Not inhibited by lithium. Partial allosteric regulation on ions sodium binding. In terms of biological role, symporter that cotransports neutral amino acids and sodium ions, coupled to an H(+) antiporter activity. Releases L-glutamine and glycine from astroglial cells and may participate in the glutamate/GABA-glutamine cycle and the NMDA receptors activation. In addition contributes significantly to L-glutamine uptake in retina, namely in ganglion and Mueller cells and, therefore participates in the retinal glutamate-glutamine cycle. The transport activity is pH sensitive, Li(+) tolerant, bidirectional and associated with large uncoupled fluxes of protons. The transport is electroneutral coupled to the cotransport of 1 Na(+) and the antiport of 1 H(+). May have particular importance for modulation of net hepatic glutamine flux. The protein is Sodium-coupled neutral amino acid transporter 5 of Bos taurus (Bovine).